The following is a 342-amino-acid chain: Antihemorrhagic factor HSF (342 aa).

A signal peptide spans 1–19 (MNSLVALVLLGQIIGSTLS). 2 consecutive Cystatin fetuin-A-type domains span residues 22–130 (VRGD…VKCH) and 141–254 (RNCS…SNCV). The short motif at 23 to 25 (RGD) is the Cell attachment site element. The segment at 24-108 (GDLECDDKEA…RQQHNHAVEM (85 aa)) is indispensable for metalloproteinase inhibition. 6 disulfides stabilise this stretch: C28–C332, C85–C96, C110–C129, C143–C146, C205–C217, and C230–C253. N142 carries N-linked (GlcNAc...) asparagine glycosylation. N204 carries N-linked (GlcNAc...) asparagine glycosylation. N-linked (GlcNAc...) asparagine glycosylation is present at N282.

This sequence belongs to the fetuin family. Post-translationally, cys-63 may exist in a mixed disulfide form with a thiol compound such as glutathione. In terms of tissue distribution, expressed by the liver.

Its subcellular location is the secreted. Inhibits hemorrhagic and proteolytic activities of metalloproteinases (HR1A, HR1B, HR2a, HR2b and H2 proteinase from T.flavodidis and brevilysins H3, H4, H6 and L4 from A.halys brevicaudus). Has no effect on brevilysins H2. Has no effect on papain and cathepsin-B. This Protobothrops flavoviridis (Habu) protein is Antihemorrhagic factor HSF.